Consider the following 241-residue polypeptide: Tumor necrosis factor receptor superfamily member 18 (241 aa).

An N-terminal signal peptide occupies residues 1-25 (MAQHGAMGAFRALCGLALLCALSLG). Topologically, residues 26 to 162 (QRPTGGPGCG…CVPGSPPAEP (137 aa)) are extracellular. Disulfide bonds link Cys34/Cys49, Cys74/Cys86, Cys81/Cys94, Cys115/Cys134, and Cys128/Cys153. 3 TNFR-Cys repeats span residues 34–72 (CGPG…EWDC), 74–112 (CVQP…GFQC), and 115–153 (CASG…NAVC). An N-linked (GlcNAc...) asparagine glycan is attached at Asn146. A helical transmembrane segment spans residues 163–183 (LGWLTVVLLAVAACVLLLTSA). Over 184 to 241 (QLGLHIWQLRSQCMWPRETQLLLEVPPSTEDARSCQFPEEERGERSAEEKGRLGDLWV) the chain is Cytoplasmic. The disordered stretch occupies residues 214-241 (DARSCQFPEEERGERSAEEKGRLGDLWV). The span at 222 to 241 (EEERGERSAEEKGRLGDLWV) shows a compositional bias: basic and acidic residues.

As to quaternary structure, binds to TRAF1, TRAF2, and TRAF3, but not TRAF5 and TRAF6. Binds through its C-terminus to SIVA1/SIVA. In terms of tissue distribution, expressed in lymph node, peripheral blood leukocytes and weakly in spleen.

It localises to the cell membrane. Its subcellular location is the secreted. Receptor for TNFSF18. Seems to be involved in interactions between activated T-lymphocytes and endothelial cells and in the regulation of T-cell receptor-mediated cell death. Mediated NF-kappa-B activation via the TRAF2/NIK pathway. The protein is Tumor necrosis factor receptor superfamily member 18 (TNFRSF18) of Homo sapiens (Human).